Consider the following 248-residue polypeptide: Triosephosphate isomerase (248 aa).

Asn11 and Lys13 together coordinate substrate. His95 acts as the Electrophile in catalysis. The active-site Proton acceptor is the Glu165.

Belongs to the triosephosphate isomerase family. Homodimer.

The protein localises to the cytoplasm. The catalysed reaction is dihydroxyacetone phosphate = methylglyoxal + phosphate. It catalyses the reaction D-glyceraldehyde 3-phosphate = dihydroxyacetone phosphate. The protein operates within carbohydrate degradation; glycolysis; D-glyceraldehyde 3-phosphate from glycerone phosphate: step 1/1. Its pathway is carbohydrate biosynthesis; gluconeogenesis. In terms of biological role, triosephosphate isomerase is an extremely efficient metabolic enzyme that catalyzes the interconversion between dihydroxyacetone phosphate (DHAP) and D-glyceraldehyde-3-phosphate (G3P) in glycolysis and gluconeogenesis. Functionally, it is also responsible for the non-negligible production of methylglyoxal a reactive cytotoxic side-product that modifies and can alter proteins, DNA and lipids. This Gallus gallus (Chicken) protein is Triosephosphate isomerase (TPI1).